Consider the following 211-residue polypeptide: Histidine biosynthesis bifunctional protein HisIE (211 aa).

The phosphoribosyl-AMP cyclohydrolase stretch occupies residues 1–107 (MNKLIDFSKG…FNSEIESRFK (107 aa)). Positions 108 to 211 (IQALAQTIHQ…KGERKEVREW (104 aa)) are phosphoribosyl-ATP pyrophosphohydrolase.

This sequence in the N-terminal section; belongs to the PRA-CH family. The protein in the C-terminal section; belongs to the PRA-PH family.

It is found in the cytoplasm. The enzyme catalyses 1-(5-phospho-beta-D-ribosyl)-ATP + H2O = 1-(5-phospho-beta-D-ribosyl)-5'-AMP + diphosphate + H(+). The catalysed reaction is 1-(5-phospho-beta-D-ribosyl)-5'-AMP + H2O = 1-(5-phospho-beta-D-ribosyl)-5-[(5-phospho-beta-D-ribosylamino)methylideneamino]imidazole-4-carboxamide. It participates in amino-acid biosynthesis; L-histidine biosynthesis; L-histidine from 5-phospho-alpha-D-ribose 1-diphosphate: step 2/9. Its pathway is amino-acid biosynthesis; L-histidine biosynthesis; L-histidine from 5-phospho-alpha-D-ribose 1-diphosphate: step 3/9. In Staphylococcus epidermidis (strain ATCC 35984 / DSM 28319 / BCRC 17069 / CCUG 31568 / BM 3577 / RP62A), this protein is Histidine biosynthesis bifunctional protein HisIE.